The following is a 158-amino-acid chain: 2-C-methyl-D-erythritol 2,4-cyclodiphosphate synthase (158 aa).

Residues Asp9 and His11 each coordinate a divalent metal cation. 4-CDP-2-C-methyl-D-erythritol 2-phosphate is bound by residues 9-11 (DVH) and 35-36 (HS). Residue His43 participates in a divalent metal cation binding. 4-CDP-2-C-methyl-D-erythritol 2-phosphate is bound by residues 57-59 (DIG), 62-66 (FPDTD), 101-107 (AQRPKMA), 133-136 (TTTE), Phe140, and Arg143.

This sequence belongs to the IspF family. In terms of assembly, homotrimer. Requires a divalent metal cation as cofactor.

The enzyme catalyses 4-CDP-2-C-methyl-D-erythritol 2-phosphate = 2-C-methyl-D-erythritol 2,4-cyclic diphosphate + CMP. Its pathway is isoprenoid biosynthesis; isopentenyl diphosphate biosynthesis via DXP pathway; isopentenyl diphosphate from 1-deoxy-D-xylulose 5-phosphate: step 4/6. Its function is as follows. Involved in the biosynthesis of isopentenyl diphosphate (IPP) and dimethylallyl diphosphate (DMAPP), two major building blocks of isoprenoid compounds. Catalyzes the conversion of 4-diphosphocytidyl-2-C-methyl-D-erythritol 2-phosphate (CDP-ME2P) to 2-C-methyl-D-erythritol 2,4-cyclodiphosphate (ME-CPP) with a corresponding release of cytidine 5-monophosphate (CMP). The sequence is that of 2-C-methyl-D-erythritol 2,4-cyclodiphosphate synthase from Lysinibacillus sphaericus (strain C3-41).